The chain runs to 226 residues: MTLLILLRHGQSVWNQKNLFTGWVDIPLSQQGIQEAIAAGESIKHLPIDCIFTSTLVRSLITALLAMTNHSSQKVPYIVHEERPDMSRIHSQKEMEQMIPLFQSSALNERMYGELQGKNKQEVAAQFGEEQVKLWRRSYRIAPPQGESLFDTGQRTLPYFQERIFPLLQQGKNIFISAHGNSLRSLIMDLEKLSEEQVLSLELPTGQPIVYEWTGQKFTKHAPSLG.

Residues 8–15 (RHGQSVWN), 21–22 (TG), R58, 109–112 (ERMY), K120, 136–137 (RR), and 180–181 (GN) each bind substrate. H9 serves as the catalytic Tele-phosphohistidine intermediate. E109 functions as the Proton donor/acceptor in the catalytic mechanism.

It belongs to the phosphoglycerate mutase family. BPG-dependent PGAM subfamily.

The enzyme catalyses (2R)-2-phosphoglycerate = (2R)-3-phosphoglycerate. It functions in the pathway carbohydrate degradation; glycolysis; pyruvate from D-glyceraldehyde 3-phosphate: step 3/5. Catalyzes the interconversion of 2-phosphoglycerate and 3-phosphoglycerate. The sequence is that of 2,3-bisphosphoglycerate-dependent phosphoglycerate mutase from Chlamydia trachomatis serovar A (strain ATCC VR-571B / DSM 19440 / HAR-13).